We begin with the raw amino-acid sequence, 485 residues long: Putative phosphoethanolamine transferase HI_1064 (485 aa).

4 helical membrane passes run I33–G53, G55–L75, S81–L101, and F125–F145.

This sequence belongs to the phosphoethanolamine transferase family.

Its subcellular location is the cell membrane. This is Putative phosphoethanolamine transferase HI_1064 from Haemophilus influenzae (strain ATCC 51907 / DSM 11121 / KW20 / Rd).